Reading from the N-terminus, the 382-residue chain is MSAPQIPNLNTLRRGGGRGRFRARGGPDSSSSSGNKDRVVQGTDNDASVSRLSAVELGYLEDPFARALTPMGQEMRRLPIINRGTYVRTTAIDQLVASFLGLKADSDPTWKLKKKQIISLGAGSDTRVFRLLSLRPALDIIYHEIDFAVNNTAKIKAIQGTPLLQRVLGQSQVSISNEGDELHSPAYHIHAVDLRTLAQKGEGDKSTGQDPGRRLQDFVDTTLPTLLLSECCLIYLSPNDAAGVVRYFTHTLFPASQETETLALVLYEPIRPDDAFGRTMVANLATRGIQLQTLHQYASLGAQRQRLREHGFNGGQAAADVDFLWERWVAEEEKERVAALEMLDEVEEWKLLAQHYCVAWGWRKGSTRFTGWGDLDGQSAEE.

Residues 1–11 are compositionally biased toward polar residues; that stretch reads MSAPQIPNLNT. Residues 1–45 form a disordered region; sequence MSAPQIPNLNTLRRGGGRGRFRARGGPDSSSSSGNKDRVVQGTDN. S-adenosyl-L-methionine contacts are provided by residues Arg88, Gly121, Asp146, 193–194, and Glu230; that span reads DL.

The protein belongs to the methyltransferase superfamily. LCMT family.

It carries out the reaction [phosphatase 2A protein]-C-terminal L-leucine + S-adenosyl-L-methionine = [phosphatase 2A protein]-C-terminal L-leucine methyl ester + S-adenosyl-L-homocysteine. Methylates the carboxyl group of the C-terminal leucine residue of protein phosphatase 2A catalytic subunits to form alpha-leucine ester residues. The protein is Leucine carboxyl methyltransferase 1 (ppm1) of Emericella nidulans (strain FGSC A4 / ATCC 38163 / CBS 112.46 / NRRL 194 / M139) (Aspergillus nidulans).